The chain runs to 386 residues: Protein phosphatase methylesterase 1 (386 aa).

The segment at 1–38 is disordered; the sequence is MSALEKSMHLGRLPSRPPLPGSGGSQSGAKMRMGPGRK. Phosphoserine is present on Ser-15. Arg-16 carries the post-translational modification Asymmetric dimethylarginine; alternate. Arg-16 carries the post-translational modification Omega-N-methylarginine; alternate. At Ser-42 the chain carries Phosphoserine. Residue Ser-156 is part of the active site. Positions 254–265 are enriched in acidic residues; it reads IIEEEEEDEEGS. A disordered region spans residues 254-280; that stretch reads IIEEEEEDEEGSESISKRKKEDDMETK. Over residues 268–280 the composition is skewed to basic and acidic residues; the sequence is ISKRKKEDDMETK. The active site involves His-349.

Belongs to the AB hydrolase superfamily. Binds PPP2CA and PPP2CB. In terms of processing, phosphorylated by SIK1 following increases in intracellular sodium, leading to dissociation from the protein phosphatase 2A (PP2A) complex and subsequent dephosphorylation of sodium/potassium-transporting ATPase ATP1A1.

The catalysed reaction is [phosphatase 2A protein]-C-terminal L-leucine methyl ester + H2O = [phosphatase 2A protein]-C-terminal L-leucine + methanol + H(+). In terms of biological role, demethylates proteins that have been reversibly carboxymethylated. Demethylates PPP2CB (in vitro) and PPP2CA. Binding to PPP2CA displaces the manganese ion and inactivates the enzyme. This Pongo abelii (Sumatran orangutan) protein is Protein phosphatase methylesterase 1 (PPME1).